The sequence spans 176 residues: Translation initiation factor IF-3 (176 aa).

Belongs to the IF-3 family. Monomer.

It is found in the cytoplasm. Functionally, IF-3 binds to the 30S ribosomal subunit and shifts the equilibrium between 70S ribosomes and their 50S and 30S subunits in favor of the free subunits, thus enhancing the availability of 30S subunits on which protein synthesis initiation begins. The protein is Translation initiation factor IF-3 of Streptococcus equi subsp. zooepidemicus (strain H70).